We begin with the raw amino-acid sequence, 182 residues long: Epoxyqueuosine reductase QueH (182 aa).

[4Fe-4S] cluster is bound by residues Cys10, Cys11, Cys85, and Cys88. A disulfide bond links Cys165 and Cys167.

The protein belongs to the QueH family.

It catalyses the reaction epoxyqueuosine(34) in tRNA + AH2 = queuosine(34) in tRNA + A + H2O. It functions in the pathway tRNA modification; tRNA-queuosine biosynthesis. Functionally, catalyzes the conversion of epoxyqueuosine (oQ) to queuosine (Q), which is a hypermodified base found in the wobble positions of tRNA(Asp), tRNA(Asn), tRNA(His) and tRNA(Tyr). The chain is Epoxyqueuosine reductase QueH from Dehalococcoides mccartyi (strain ATCC BAA-2266 / KCTC 15142 / 195) (Dehalococcoides ethenogenes (strain 195)).